The primary structure comprises 1090 residues: Exocyst complex component SEC5B (1090 aa).

Acidic residues predominate over residues 1–12; that stretch reads MSSSDDLDEDEL. The interval 1-126 is disordered; that stretch reads MSSSDDLDED…ARKEDDRAWD (126 aa). Positions 23-46 are enriched in polar residues; it reads RDVTYQKPPSANSRKPVTNLVQQP. Over residues 52–62 the composition is skewed to low complexity; it reads AAAPPSKGGAK. The span at 96-109 shows a compositional bias: gly residues; sequence GGGGDGGGGRGRGG. Over residues 110–126 the composition is skewed to basic and acidic residues; it reads SGKERGRARKEDDRAWD. Ser-179 carries the phosphoserine modification. Over residues 486-502 the composition is skewed to polar residues; the sequence is VQLSDDTSSMEDNQVQV. 3 disordered regions span residues 486–511, 984–1013, and 1055–1090; these read VQLS…ESAR, ETVE…QSSV, and PVAK…PRRR. The span at 999–1010 shows a compositional bias: basic and acidic residues; sequence RGSEDAISDDKQ. The span at 1062 to 1071 shows a compositional bias: polar residues; it reads SRTSTDSPSR.

It belongs to the SEC5 family. In terms of assembly, the exocyst complex is composed of SEC3, SEC5, SEC6, SEC8, SEC10, EXO70A1 and EXO84B.

Component of the exocyst complex involved in the docking of exocytic vesicles with fusion sites on the plasma membrane during regulated or polarized secretion. Involved in polarized cell growth and organ morphogenesis. During cytokinesis, involved in cell plate initiation, cell plate maturation and formation of new primary cell wall. This is Exocyst complex component SEC5B (SEC5B) from Arabidopsis thaliana (Mouse-ear cress).